The sequence spans 238 residues: Uridylate kinase (238 aa).

An ATP-binding site is contributed by 12–15 (KVSG). G54 lines the UMP pocket. The ATP site is built by G55 and R59. Residues D74 and 135–142 (TGNPYFTT) each bind UMP. T162, N163, Y168, and D171 together coordinate ATP.

Belongs to the UMP kinase family. In terms of assembly, homohexamer.

It is found in the cytoplasm. It carries out the reaction UMP + ATP = UDP + ADP. The protein operates within pyrimidine metabolism; CTP biosynthesis via de novo pathway; UDP from UMP (UMPK route): step 1/1. Its activity is regulated as follows. Inhibited by UTP. Its function is as follows. Catalyzes the reversible phosphorylation of UMP to UDP. This chain is Uridylate kinase, found in Azorhizobium caulinodans (strain ATCC 43989 / DSM 5975 / JCM 20966 / LMG 6465 / NBRC 14845 / NCIMB 13405 / ORS 571).